The following is a 301-amino-acid chain: Elongation factor Ts (301 aa).

Residues 82–85 are involved in Mg(2+) ion dislocation from EF-Tu; that stretch reads TDFV.

This sequence belongs to the EF-Ts family.

It is found in the cytoplasm. Its function is as follows. Associates with the EF-Tu.GDP complex and induces the exchange of GDP to GTP. It remains bound to the aminoacyl-tRNA.EF-Tu.GTP complex up to the GTP hydrolysis stage on the ribosome. This chain is Elongation factor Ts, found in Hyphomonas neptunium (strain ATCC 15444).